The following is a 94-amino-acid chain: Phosphoribosyl-ATP pyrophosphatase (94 aa).

Belongs to the PRA-PH family.

The protein localises to the cytoplasm. The enzyme catalyses 1-(5-phospho-beta-D-ribosyl)-ATP + H2O = 1-(5-phospho-beta-D-ribosyl)-5'-AMP + diphosphate + H(+). The protein operates within amino-acid biosynthesis; L-histidine biosynthesis; L-histidine from 5-phospho-alpha-D-ribose 1-diphosphate: step 2/9. The polypeptide is Phosphoribosyl-ATP pyrophosphatase (hisE) (Pyrobaculum aerophilum (strain ATCC 51768 / DSM 7523 / JCM 9630 / CIP 104966 / NBRC 100827 / IM2)).